A 238-amino-acid chain; its full sequence is 2-C-methyl-D-erythritol 4-phosphate cytidylyltransferase (238 aa).

It belongs to the IspD/TarI cytidylyltransferase family. IspD subfamily.

The catalysed reaction is 2-C-methyl-D-erythritol 4-phosphate + CTP + H(+) = 4-CDP-2-C-methyl-D-erythritol + diphosphate. The protein operates within isoprenoid biosynthesis; isopentenyl diphosphate biosynthesis via DXP pathway; isopentenyl diphosphate from 1-deoxy-D-xylulose 5-phosphate: step 2/6. In terms of biological role, catalyzes the formation of 4-diphosphocytidyl-2-C-methyl-D-erythritol from CTP and 2-C-methyl-D-erythritol 4-phosphate (MEP). This is 2-C-methyl-D-erythritol 4-phosphate cytidylyltransferase from Acinetobacter baumannii (strain SDF).